The primary structure comprises 617 residues: Protein AsmA (617 aa).

Over 1–3 (MRR) the chain is Cytoplasmic. The helical transmembrane segment at 4–24 (FLTTLMILLVVLVAGLSALVL) threads the bilayer. At 25–617 (LVNPNDFRDY…KDVKKLLEKM (593 aa)) the chain is on the periplasmic side. Polar residues predominate over residues 302–319 (TANGENGAAQQGQSQSTL). Positions 302-321 (TANGENGAAQQGQSQSTLPR) are disordered.

This sequence belongs to the AsmA family.

It is found in the cell inner membrane. Functionally, could be involved in the assembly of outer membrane proteins. May indirectly influence the assembly of outer membrane proteins, potentially by altering outer membrane fluidity. Inhibits the assembly of mutant forms of outer membrane protein F (OmpF). The chain is Protein AsmA from Escherichia coli (strain K12).